The primary structure comprises 353 residues: Phosphoribosylformylglycinamidine cyclo-ligase (353 aa).

It belongs to the AIR synthase family.

It is found in the cytoplasm. The catalysed reaction is 2-formamido-N(1)-(5-O-phospho-beta-D-ribosyl)acetamidine + ATP = 5-amino-1-(5-phospho-beta-D-ribosyl)imidazole + ADP + phosphate + H(+). It participates in purine metabolism; IMP biosynthesis via de novo pathway; 5-amino-1-(5-phospho-D-ribosyl)imidazole from N(2)-formyl-N(1)-(5-phospho-D-ribosyl)glycinamide: step 2/2. The polypeptide is Phosphoribosylformylglycinamidine cyclo-ligase (Symbiobacterium thermophilum (strain DSM 24528 / JCM 14929 / IAM 14863 / T)).